The chain runs to 862 residues: Protein PRQFV-amide (862 aa).

Residues 1–20 form the signal peptide; that stretch reads MSSQLLICSVFVLFTFGPNS. Positions 21–79 are excised as a propeptide; the sequence is FPSCLAQEQAGNSDATQLSADAKAPESAKDKSGDVQNDGTKSVRSKRDLEIDFGSGDVQ. Residues 32–68 form a disordered region; the sequence is NSDATQLSADAKAPESAKDKSGDVQNDGTKSVRSKRD. Over residues 43-53 the composition is skewed to basic and acidic residues; sequence KAPESAKDKSG. Val-86 carries the post-translational modification Valine amide. A propeptide spanning residues 90–149 is cleaved from the precursor; sequence AAPPVFQTPLVQDKISGFIPSETESPVIGEFAFPGSVFMDDEEALGAEEEPMDDEDLEFY. Position 156 is a valine amide (Val-156). Residues 160 to 175 constitute a propeptide that is removed on maturation; it reads GIDDYLLQEKLKDFIE. 9 positions are modified to valine amide: Val-182, Val-190, Val-198, Val-206, Val-214, Val-222, Val-230, Val-238, and Val-246. Positions 250–259 are excised as a propeptide; that stretch reads EADPSFLFED. A Valine amide modification is found at Val-266. Residues 270–300 constitute a propeptide that is removed on maturation; the sequence is SLDFLGGANWYNPYDVTMEPQSEGSDLQGFS. Val-307 is subject to Valine amide. Positions 311-319 are excised as a propeptide; sequence DAFDMFEFS. Val-326 is subject to Valine amide. Residues 330–338 constitute a propeptide that is removed on maturation; that stretch reads DQDEMFDFS. A Valine amide modification is found at Val-345. Positions 349 to 357 are excised as a propeptide; sequence DLQEFFDLS. Val-364 is subject to Valine amide. Positions 368–376 are excised as a propeptide; that stretch reads EFDDEIDFS. Val-383 bears the Valine amide mark. Residues 387–395 constitute a propeptide that is removed on maturation; that stretch reads ENDDDFDLS. Val-402 is modified (valine amide). Residues 406 to 414 constitute a propeptide that is removed on maturation; that stretch reads ENDDEFDLS. Val-421 is modified (valine amide). The segment covering 424 to 434 has biased composition (basic and acidic residues); the sequence is RENDDELEFSK. Residues 424 to 528 are disordered; the sequence is RENDDELEFS…NNDDLDFSKR (105 aa). Residues 425–433 constitute a propeptide that is removed on maturation; the sequence is ENDDELEFS. Val-440 bears the Valine amide mark. Residues 441–452 show a composition bias toward basic and acidic residues; it reads GKREDDEIDFSK. Residues 444–451 constitute a propeptide that is removed on maturation; it reads EDDEIDFS. Val-458 bears the Valine amide mark. Positions 459 to 471 are enriched in basic and acidic residues; sequence GKRENDGEIDFSK. A propeptide spanning residues 462–470 is cleaved from the precursor; that stretch reads ENDGEIDFS. A Valine amide modification is found at Val-477. The segment covering 478-490 has biased composition (basic and acidic residues); it reads GKRENDDEIDFSK. Residues 481 to 489 constitute a propeptide that is removed on maturation; sequence ENDDEIDFS. Val-496 is subject to Valine amide. A compositionally biased stretch (basic and acidic residues) spans 497-508; the sequence is GKREDGEIDFSK. Positions 500–507 are excised as a propeptide; it reads EDGEIDFS. The residue at position 514 (Val-514) is a Valine amide. The span at 515–527 shows a compositional bias: basic and acidic residues; it reads GKRENNDDLDFSK. Residues 518-526 constitute a propeptide that is removed on maturation; the sequence is ENNDDLDFS. Val-533 bears the Valine amide mark. A propeptide spanning residues 537-545 is cleaved from the precursor; sequence EVDDEIDFS. Positions 549 to 634 are disordered; the sequence is RQFVGKREND…RQFVGKREND (86 aa). Valine amide is present on Val-552. A compositionally biased stretch (basic and acidic residues) spans 553 to 565; that stretch reads GKRENDDDLDFSK. Positions 556–564 are excised as a propeptide; it reads ENDDDLDFS. At Val-571 the chain carries Valine amide. The segment covering 572 to 584 has biased composition (basic and acidic residues); sequence GKRENDDDLEFSK. The propeptide occupies 575-583; that stretch reads ENDDDLEFS. Residue Val-590 is modified to Valine amide. Positions 594-602 are excised as a propeptide; it reads ENDPLLDFS. Valine amide is present on Val-609. Positions 610-622 are enriched in basic and acidic residues; that stretch reads GKRENDDDLDFSK. The propeptide occupies 613 to 621; it reads ENDDDLDFS. A Valine amide modification is found at Val-628. The propeptide occupies 632 to 640; sequence ENDPLIDFS. Val-647 carries the post-translational modification Valine amide. Residues 651-659 constitute a propeptide that is removed on maturation; the sequence is ESDGDFELS. At Val-666 the chain carries Valine amide. The propeptide occupies 670–677; it reads DVDGPGLS. A Valine amide modification is found at Val-684. Positions 688–695 are excised as a propeptide; that stretch reads EDYDIDFA. A Valine amide modification is found at Val-702. A propeptide spanning residues 706 to 714 is cleaved from the precursor; it reads GNEDEFEMS. Val-721 bears the Valine amide mark. A propeptide spanning residues 724-757 is cleaved from the precursor; that stretch reads RNFEELDQDFLRHMHDILDKRIPQFVSLPSLTAA. Residue Val-764 is modified to Valine amide. A propeptide spanning residues 768–812 is cleaved from the precursor; that stretch reads SDAAFLETLRHLRDYVGGQDEQNVSEFSYQHPYPSDLNDVGLIQQ. Residue Val-819 is modified to Valine amide. A propeptide spanning residues 823-862 is cleaved from the precursor; that stretch reads GGDVDDINTTYRLGDFVSQPMSFVEEPSWLCRQLNAFGIS.

Expressed abundantly in the abdominal ganglion, much less in the pedal and cerebral ganglia, and rarely in the buccal and pleural ganglia.

It localises to the secreted. Functionally, PRQFV-amide may act as a modulator within the feeding system as well as in other systems of Aplysia. The sequence is that of Protein PRQFV-amide from Aplysia californica (California sea hare).